A 201-amino-acid polypeptide reads, in one-letter code: Recombination protein RecR (201 aa).

Residues 60–75 (CSVCGNIDTTDPCSIC) form a C4-type zinc finger. A Toprim domain is found at 83 to 178 (GTIIVVEDIS…KITRLAHGVP (96 aa)).

It belongs to the RecR family.

In terms of biological role, may play a role in DNA repair. It seems to be involved in an RecBC-independent recombinational process of DNA repair. It may act with RecF and RecO. In Bartonella bacilliformis (strain ATCC 35685 / KC583 / Herrer 020/F12,63), this protein is Recombination protein RecR.